The following is a 592-amino-acid chain: A-type ATP synthase subunit A (592 aa).

233-240 provides a ligand contact to ATP; sequence GPFGSGKT.

The protein belongs to the ATPase alpha/beta chains family. Has multiple subunits with at least A(3), B(3), C, D, E, F, H, I and proteolipid K(x).

It localises to the cell membrane. The catalysed reaction is ATP + H2O + 4 H(+)(in) = ADP + phosphate + 5 H(+)(out). Component of the A-type ATP synthase that produces ATP from ADP in the presence of a proton gradient across the membrane. The A chain is the catalytic subunit. The polypeptide is A-type ATP synthase subunit A (Saccharolobus islandicus (strain Y.G.57.14 / Yellowstone #1) (Sulfolobus islandicus)).